The chain runs to 223 residues: uncharacterized protein (223 aa).

4 helical membrane passes run 22 to 42, 59 to 79, 85 to 105, and 164 to 184; these read LTVG…FVVV, GVAL…ATLI, IFSL…WCSM, and MAWA…SQAF.

The protein belongs to the Rht family.

It is found in the cell membrane. This is an uncharacterized protein from Escherichia coli (strain K12).